Reading from the N-terminus, the 436-residue chain is Nicotinate phosphoribosyltransferase (436 aa).

Phosphohistidine; by autocatalysis is present on His-231.

Belongs to the NAPRTase family. In terms of processing, transiently phosphorylated on a His residue during the reaction cycle. Phosphorylation strongly increases the affinity for substrates and increases the rate of nicotinate D-ribonucleotide production. Dephosphorylation regenerates the low-affinity form of the enzyme, leading to product release.

It carries out the reaction nicotinate + 5-phospho-alpha-D-ribose 1-diphosphate + ATP + H2O = nicotinate beta-D-ribonucleotide + ADP + phosphate + diphosphate. It participates in cofactor biosynthesis; NAD(+) biosynthesis; nicotinate D-ribonucleotide from nicotinate: step 1/1. Functionally, catalyzes the synthesis of beta-nicotinate D-ribonucleotide from nicotinate and 5-phospho-D-ribose 1-phosphate at the expense of ATP. The sequence is that of Nicotinate phosphoribosyltransferase from Vibrio campbellii (strain ATCC BAA-1116).